Consider the following 328-residue polypeptide: tRNA dimethylallyltransferase (328 aa).

ATP is bound at residue 25-32 (GNTGSGKS). 27–32 (TGSGKS) contacts substrate. The segment at 50 to 53 (DSRQ) is interaction with substrate tRNA.

The protein belongs to the IPP transferase family. Monomer. It depends on Mg(2+) as a cofactor.

The catalysed reaction is adenosine(37) in tRNA + dimethylallyl diphosphate = N(6)-dimethylallyladenosine(37) in tRNA + diphosphate. Catalyzes the transfer of a dimethylallyl group onto the adenine at position 37 in tRNAs that read codons beginning with uridine, leading to the formation of N6-(dimethylallyl)adenosine (i(6)A). The polypeptide is tRNA dimethylallyltransferase (Dehalococcoides mccartyi (strain ATCC BAA-2100 / JCM 16839 / KCTC 5957 / BAV1)).